The chain runs to 376 residues: T-box transcription factor 18 (376 aa).

Positions 38 to 63 (STSRPSSSSPPSLPAVSSELLSSSFP) are enriched in low complexity. The segment at 38–76 (STSRPSSSSPPSLPAVSSELLSSSFPTNAPESSSRDLAP) is disordered. Positions 171–364 (LANQEQWAKF…GNKYCRTDRK (194 aa)) form a DNA-binding region, T-box.

The protein localises to the nucleus. In terms of biological role, transcriptional regulator involved in developmental processes. Directly binds to the promoter region of the sex-determining factor xol-1 to activate its transcription. Its activation of xol-1 transcription controls sex determination and X chromosome dosage compensation to promote male development. Has a role in the fox-1-sex-1-mediated determination of sexual fate. The polypeptide is T-box transcription factor 18 (Caenorhabditis elegans).